Here is a 418-residue protein sequence, read N- to C-terminus: Serine hydroxymethyltransferase (418 aa).

(6S)-5,6,7,8-tetrahydrofolate contacts are provided by residues L121 and 125-127 (GHL). K230 is modified (N6-(pyridoxal phosphate)lysine). (6S)-5,6,7,8-tetrahydrofolate is bound by residues E246 and 355-357 (SPF).

It belongs to the SHMT family. As to quaternary structure, homodimer. Requires pyridoxal 5'-phosphate as cofactor.

It is found in the cytoplasm. The enzyme catalyses (6R)-5,10-methylene-5,6,7,8-tetrahydrofolate + glycine + H2O = (6S)-5,6,7,8-tetrahydrofolate + L-serine. Its pathway is one-carbon metabolism; tetrahydrofolate interconversion. The protein operates within amino-acid biosynthesis; glycine biosynthesis; glycine from L-serine: step 1/1. Functionally, catalyzes the reversible interconversion of serine and glycine with tetrahydrofolate (THF) serving as the one-carbon carrier. This reaction serves as the major source of one-carbon groups required for the biosynthesis of purines, thymidylate, methionine, and other important biomolecules. Also exhibits THF-independent aldolase activity toward beta-hydroxyamino acids, producing glycine and aldehydes, via a retro-aldol mechanism. In Streptococcus pneumoniae (strain ATCC 700669 / Spain 23F-1), this protein is Serine hydroxymethyltransferase.